Reading from the N-terminus, the 272-residue chain is Ribonuclease HII (272 aa).

The RNase H type-2 domain occupies 87–272 (KYVAGVDEVG…HRMSFLKNIL (186 aa)). A divalent metal cation contacts are provided by Asp93, Glu94, and Asp188.

This sequence belongs to the RNase HII family. The cofactor is Mn(2+). It depends on Mg(2+) as a cofactor.

The protein resides in the cytoplasm. It carries out the reaction Endonucleolytic cleavage to 5'-phosphomonoester.. Its function is as follows. Endonuclease that specifically degrades the RNA of RNA-DNA hybrids. In Clostridium perfringens (strain SM101 / Type A), this protein is Ribonuclease HII.